Reading from the N-terminus, the 461-residue chain is Thyroid hormone receptor beta (461 aa).

The segment at 1–24 (MTPNSMTENGLPAWDKQKPRPDRG) is disordered. The modulating stretch occupies residues 1-106 (MTPNSMTENG…IPSYLDKDEL (106 aa)). Residues 15-24 (DKQKPRPDRG) show a composition bias toward basic and acidic residues. Residues C107, C110, C124, C127, C145, C151, C161, and C164 each coordinate Zn(2+). 2 consecutive NR C4-type zinc fingers follow at residues 107-127 (CVVCGDKATGYHYRCITCEGC) and 145-169 (CKYEGKCIIDKVTRNQCQECRFKKC). The segment at residues 107-181 (CVVCGDKATG…VGMATDLVLD (75 aa)) is a DNA-binding region (nuclear receptor). The 245-residue stretch at 217 to 461 (EEWELIKTVT…PPLFLEVFED (245 aa)) folds into the NR LBD domain. An interaction with NR2F6 region spans residues 244-461 (KFLPEDIGQA…PPLFLEVFED (218 aa)). Positions 282, 331, and 435 each coordinate 3,3',5-triiodo-L-thyronine. L-thyroxine-binding residues include R282, N331, and H435.

The protein belongs to the nuclear hormone receptor family. NR1 subfamily. Binds DNA as a dimer; homodimer and heterodimer with RXRB. Interacts with the coactivators NCOA1/SRC1, NCOA2/GRIP1, NCOA7 and MED1/TRAP220 in a ligand-inducible manner. Interacts with the corepressor NCOR1 in absence of ligand. Interacts with C1D. Interacts with NR2F6; the interaction impairs the binding of the THRB homodimer and THRB:RXRB heterodimer to T3 response elements. Interacts with PRMT2 and THRSP. Interacts with TACC1; this interaction is decreased in the presence of thyroid hormone T3.

It is found in the nucleus. In terms of biological role, nuclear hormone receptor that can act as a repressor or activator of transcription. High affinity receptor for thyroid hormones, including triiodothyronine and thyroxine. The sequence is that of Thyroid hormone receptor beta (Thrb) from Mus musculus (Mouse).